The chain runs to 708 residues: Ubiquitin thioesterase ZRANB1 (708 aa).

The segment at 3-33 adopts a RanBP2-type 1 zinc-finger fold; sequence ERGIKWACEYCTYENWPSAIKCTMCRAQRPS. Residues Cys-10, Cys-13, Cys-24, and Cys-27 each coordinate Zn(2+). The disordered stretch occupies residues 38–73; the sequence is TEDPFKSGSSDVGRDWDPSSTEGGSSPLICPDSSAR. RanBP2-type zinc fingers lie at residues 84-113 and 149-178; these read NANK…QRRT and RTQH…PRPN. 8 residues coordinate Zn(2+): Cys-90, Cys-93, Cys-104, Cys-107, Cys-155, Cys-158, Cys-169, and Cys-172. Residues 200–223 are disordered; the sequence is RARWRGSCSSGNSQRRSPPTMKRD. Residues 206–216 show a composition bias toward polar residues; the sequence is SCSSGNSQRRS. ANK repeat units lie at residues 260 to 290 and 313 to 340; these read KKTD…SGGD and YTLV…QQAA. Residues 432-592 enclose the OTU domain; sequence LYALWNRTAG…RGHFSALVAM (161 aa). Cys-443 serves as the catalytic Nucleophile. His-585 serves as the catalytic Proton acceptor.

It belongs to the peptidase C64 family. In terms of assembly, interacts with TRAF6. Interacts with APC.

The protein resides in the cytoplasm. It is found in the nucleus. The enzyme catalyses Thiol-dependent hydrolysis of ester, thioester, amide, peptide and isopeptide bonds formed by the C-terminal Gly of ubiquitin (a 76-residue protein attached to proteins as an intracellular targeting signal).. In terms of biological role, ubiquitin thioesterase, which specifically hydrolyzes 'Lys-29'-linked and 'Lys-33'-linked diubiquitin. Also cleaves 'Lys-63'-linked chains, but with 40-fold less efficiency compared to 'Lys-29'-linked ones. Positive regulator of the Wnt signaling pathway that deubiquitinates APC protein, a negative regulator of Wnt-mediated transcription. Acts as a regulator of autophagy by mediating deubiquitination of PIK3C3/VPS34, thereby promoting autophagosome maturation. Plays a role in the regulation of cell morphology and cytoskeletal organization. Required in the stress fiber dynamics and cell migration. This is Ubiquitin thioesterase ZRANB1 from Bos taurus (Bovine).